Reading from the N-terminus, the 189-residue chain is uncharacterized protein (189 aa).

Transmembrane regions (helical) follow at residues 35 to 55 (IIWYGVSIAVIVILADMAVMK), 97 to 117 (GVLQTHIGLWTASLIFAALHF), 123 to 143 (WLLFIMVTAISFLLGLMYEWT), and 144 to 164 (GNLFVPMTAHFIIDAVFACQI).

It is found in the cell membrane. This is an uncharacterized protein from Bacillus subtilis (strain 168).